Reading from the N-terminus, the 193-residue chain is Ion-translocating oxidoreductase complex subunit A (193 aa).

6 helical membrane passes run 5–25 (LLLFVGTVLVNNFVLVKFLGL), 47–67 (FVMTLASICAWLIDTWILIPL), 72–92 (LRTLAFILVIAVVVQFTEMVV), 102–122 (LLGIFLPLITTNCAVLGVALL), 134–154 (ALYGFSAAVGFSLVMVLFAAI), and 171–191 (AIALITAGLMSLAFMGFSGLV).

This sequence belongs to the NqrDE/RnfAE family. The complex is composed of six subunits: RsxA, RsxB, RsxC, RsxD, RsxE and RsxG.

It localises to the cell inner membrane. Part of a membrane-bound complex that couples electron transfer with translocation of ions across the membrane. Required to maintain the reduced state of SoxR. The polypeptide is Ion-translocating oxidoreductase complex subunit A (Salmonella agona (strain SL483)).